Reading from the N-terminus, the 138-residue chain is Protein PsiE homolog (138 aa).

Transmembrane regions (helical) follow at residues 12 to 34 (YLLQ…ALLI), 56 to 76 (YEML…ALII), 84 to 104 (HFPL…LIII), and 109 to 129 (AIST…FFIA).

The protein belongs to the PsiE family.

The protein resides in the cell membrane. This is Protein PsiE homolog from Bacillus subtilis (strain 168).